The chain runs to 185 residues: Hypoxanthine/guanine phosphoribosyltransferase (185 aa).

This sequence belongs to the purine/pyrimidine phosphoribosyltransferase family. Archaeal HPRT subfamily. In terms of assembly, homodimer.

The protein resides in the cytoplasm. It catalyses the reaction IMP + diphosphate = hypoxanthine + 5-phospho-alpha-D-ribose 1-diphosphate. The enzyme catalyses GMP + diphosphate = guanine + 5-phospho-alpha-D-ribose 1-diphosphate. It functions in the pathway purine metabolism; IMP biosynthesis via salvage pathway; IMP from hypoxanthine: step 1/1. Its function is as follows. Catalyzes a salvage reaction resulting in the formation of IMP that is energically less costly than de novo synthesis. The protein is Hypoxanthine/guanine phosphoribosyltransferase of Methanococcus maripaludis (strain C7 / ATCC BAA-1331).